A 132-amino-acid polypeptide reads, in one-letter code: Small ribosomal subunit protein uS11 (132 aa).

Basic residues predominate over residues 1 to 16 (MAAGMKGKRSRRRKER). Positions 1-20 (MAAGMKGKRSRRRKERKNVE) are disordered.

The protein belongs to the universal ribosomal protein uS11 family. As to quaternary structure, part of the 30S ribosomal subunit. Interacts with proteins S7 and S18. Binds to IF-3.

Located on the platform of the 30S subunit, it bridges several disparate RNA helices of the 16S rRNA. Forms part of the Shine-Dalgarno cleft in the 70S ribosome. This Clostridium botulinum (strain Kyoto / Type A2) protein is Small ribosomal subunit protein uS11.